Here is a 477-residue protein sequence, read N- to C-terminus: Pentatricopeptide repeat-containing protein At4g14170 (477 aa).

PPR repeat units follow at residues 65–96, 97–131, 133–167, 168–198, 199–233, 234–264, 269–299, 300–334, 335–369, and 370–400; these read NVVL…MPYR, NIFS…SCVR, DDFT…GFSS, SLFV…MPVR, DSVL…GFAL, DSVV…CIRR, GLNL…MSRR, DVIS…GIEP, NAVT…NIVP, and ELKH…MPVK. Residues 405–477 form a type E motif; degenerate region; that stretch reads VMGAVLSGCK…ISKVPGCSSI (73 aa).

This sequence belongs to the PPR family. PCMP-E subfamily.

The polypeptide is Pentatricopeptide repeat-containing protein At4g14170 (PCMP-E17) (Arabidopsis thaliana (Mouse-ear cress)).